Consider the following 268-residue polypeptide: MTYTLLDPDELARRAAQVIGERTGILKHDVAVVLGSGWSSAVAALGSSRAVFPQAELPGFITPNAAGHTGELLSVRIGAHRVLVLAGRIHPYEGHDLRHVVHPVRTACAAGARIIVLTNAAGGLRADMAVGQLVLISDHLNLTTRSPLVGTHFVDLTNAYTTRLRKLASDTDPTLTEGVYAAQPGPHYETPAEIRMLRMLGADLVGMSTVHETIAARAAGAEVLGVSLVTNLAAGITGKPLNHAEVLAAGTASANRIGSLLADIIARF.

Phosphate-binding positions include Ser-36, His-68, 88–90 (RIH), and Ala-120. Residue Glu-189 participates in a purine D-ribonucleoside binding. Ser-208 lines the phosphate pocket. An a purine D-ribonucleoside-binding site is contributed by Asn-231.

This sequence belongs to the PNP/MTAP phosphorylase family. As to quaternary structure, homotrimer.

It catalyses the reaction a purine 2'-deoxy-D-ribonucleoside + phosphate = a purine nucleobase + 2-deoxy-alpha-D-ribose 1-phosphate. It functions in the pathway purine metabolism; purine nucleoside salvage. In terms of biological role, the purine nucleoside phosphorylases catalyze the phosphorolytic breakdown of the N-glycosidic bond in the beta-(deoxy)ribonucleoside molecules, with the formation of the corresponding free purine bases and pentose-1-phosphate. Cleaves guanosine, inosine, 2'-deoxyguanosine and 2'-deoxyinosine. In Mycobacterium leprae (strain TN), this protein is Purine nucleoside phosphorylase (punA).